Here is a 1386-residue protein sequence, read N- to C-terminus: Rab3 GTPase-activating protein non-catalytic subunit (1386 aa).

The tract at residues 31 to 69 (GALRRDPSKTSNWEDDSWGAWEETEPQEPEEEGNTSKTQ) is disordered. At S38 the chain carries Phosphoserine. The span at 43 to 63 (WEDDSWGAWEETEPQEPEEEG) shows a compositional bias: acidic residues. Phosphoserine is present on S448. T899 bears the Phosphothreonine mark. S914 is modified (phosphoserine). The span at 959–973 (REKDVENPDEPREGI) shows a compositional bias: basic and acidic residues. The interval 959-982 (REKDVENPDEPREGIARSPPEVSE) is disordered. At S976 the chain carries Phosphoserine.

This sequence belongs to the Rab3-GAP regulatory subunit family. In terms of assembly, the Rab3 GTPase-activating complex is a heterodimer composed of Rab3gap1 and Rab3gap2. The Rab3 GTPase-activating complex interacts with DMXL2. Interacts with LMAN1.

It is found in the cytoplasm. The protein resides in the endoplasmic reticulum. Functionally, regulatory subunit of the Rab3 GTPase-activating (Rab3GAP) complex composed of RAB3GAP1 and RAB3GAP2, which has GTPase-activating protein (GAP) activity towards various Rab3 subfamily members (RAB3A, RAB3B, RAB3C and RAB3D), RAB5A and RAB43, and guanine nucleotide exchange factor (GEF) activity towards RAB18. As part of the Rab3GAP complex, acts as a GAP for Rab3 proteins by converting active RAB3-GTP to the inactive form RAB3-GDP. Rab3 proteins are involved in regulated exocytosis of neurotransmitters and hormones. The Rab3GAP complex acts as a GEF for RAB18 by promoting the conversion of inactive RAB18-GDP to the active form RAB18-GTP. Recruits and stabilizes RAB18 at the cis-Golgi membrane in fibroblasts where RAB18 is most likely activated. Also involved in RAB18 recruitment at the endoplasmic reticulum (ER) membrane where it maintains proper ER structure. Required for normal eye and brain development. May participate in neurodevelopmental processes such as proliferation, migration and differentiation before synapse formation, and non-synaptic vesicular release of neurotransmitters. The protein is Rab3 GTPase-activating protein non-catalytic subunit of Rattus norvegicus (Rat).